Here is a 315-residue protein sequence, read N- to C-terminus: Olfactory receptor 3A1 (315 aa).

Topologically, residues 1 to 28 (MQPESGANGTVIAEFILLGLLEAPGLQP) are extracellular. The N-linked (GlcNAc...) asparagine glycan is linked to N8. Residues 29 to 52 (VVFVLFLFAYLVTVRGNLSILAAV) form a helical membrane-spanning segment. The Cytoplasmic portion of the chain corresponds to 53–60 (LVEPKLHT). A helical transmembrane segment spans residues 61 to 82 (PMYFFLGNLSVLDVGCISVTVP). Residues 83 to 103 (SMLSRLLSRKRAVPCGACLTQ) are Extracellular-facing. A disulfide bridge links C100 with C192. A helical transmembrane segment spans residues 104–123 (LFFFHLFVGVDCFLLTAMAY). The Cytoplasmic portion of the chain corresponds to 124–143 (DRFLAICRPLTYSTRMSQTV). A helical transmembrane segment spans residues 144 to 161 (QRMLVAASWACAFTNALT). Topologically, residues 162-199 (HTVAMSTLNFCGPNVINHFYCDLPQLFQLSCSSTQLNE) are extracellular. Residues 200 to 223 (LLLFAVGFIMAGTPMALIVISYIH) traverse the membrane as a helical segment. Residues 224 to 240 (VAAAVLRIRSVEGRKKA) are Cytoplasmic-facing. The chain crosses the membrane as a helical span at residues 241–264 (FSTCGSHLTVVAIFYGSGIFNYMR). Topologically, residues 265–275 (LGSTKLSDKDK) are extracellular. Residues 276 to 295 (AVGIFNTVINPMLNPIIYSF) form a helical membrane-spanning segment. Over 296 to 315 (RNPDVQSAIWRMLTGRRSLA) the chain is Cytoplasmic.

The protein belongs to the G-protein coupled receptor 1 family.

It localises to the cell membrane. Its function is as follows. Odorant receptor. This chain is Olfactory receptor 3A1 (OR3A1), found in Homo sapiens (Human).